We begin with the raw amino-acid sequence, 782 residues long: MAPSAWAICWLLGGLLLHGGSSGPSPGPSVPRLRLSYRDLLSANRSAIFLGPQGSLNLQAMYLDEYRDRLFLGGLDALYSLRLDQAWPDPREVLWPPQPGQREECVRKGRDPLTECANFVRVLQPHNRTHLLACGTGAFQPTCALITVGHRGEHVLHLEPGSVESGRGRCPHEPSRPFASTFIDGELYTGLTADFLGREAMIFRSGGPRPALRSDSDQSLLHDPRFVMAARIPENSDQDNDKVYFFFSETVPSPDGGSNHVTVSRVGRVCVNDAGGQRVLVNKWSTFLKARLVCSVPGPGGAETHFDQLEDVFLLWPKAGKSLEVYALFSTVSAVFQGFAVCVYHMADIWEVFNGPFAHRDGPQHQWGPYGGKVPFPRPGVCPSKMTAQPGRPFGSTKDYPDEVLQFARAHPLMFWPVRPRHGRPVLVKTHLAQQLHQIVVDRVEAEDGTYDVIFLGTDSGSVLKVIALQAGGSAEPEEVVLEELQVFKVPTPITEMEISVKRQMLYVGSRLGVAQLRLHQCETYGTACAECCLARDPYCAWDGASCTHYRPSLGKRRFRRQDIRHGNPALQCLGQSQEEEAVGLVAATMVYGTEHNSTFLECLPKSPQAAVRWLLQRPGDEGPDQVKTDERVLHTERGLLFRRLSRFDAGTYTCTTLEHGFSQTVVRLALVVIVASQLDNLFPPEPKPEEPPARGGLASTPPKAWYKDILQLIGFANLPRVDEYCERVWCRGTTECSGCFRSRSRGKQARGKSWAGLELGKKMKSRVHAEHNRTPREVEAT.

The first 22 residues, 1–22 (MAPSAWAICWLLGGLLLHGGSS), serve as a signal peptide directing secretion. Positions 32–519 (RLRLSYRDLL…SRLGVAQLRL (488 aa)) constitute a Sema domain. Residue asparagine 44 is glycosylated (N-linked (GlcNAc...) asparagine). Cysteine 105 and cysteine 116 are disulfide-bonded. Asparagine 127 carries N-linked (GlcNAc...) asparagine glycosylation. 5 disulfide bridges follow: cysteine 134/cysteine 143, cysteine 270/cysteine 382, cysteine 294/cysteine 342, cysteine 522/cysteine 540, and cysteine 603/cysteine 655. The region spanning 569 to 671 (PALQCLGQSQ…FSQTVVRLAL (103 aa)) is the Ig-like C2-type domain.

This sequence belongs to the semaphorin family.

The protein resides in the secreted. Its function is as follows. Has chemorepulsive activities for sympathetic axons. Ligand of NRP2. This Homo sapiens (Human) protein is Semaphorin-3G (SEMA3G).